The following is a 191-amino-acid chain: GTP-dependent dephospho-CoA kinase (191 aa).

GTP-binding residues include Asp-46, Asp-65, Lys-67, and Glu-122.

Belongs to the GTP-dependent DPCK family.

It catalyses the reaction 3'-dephospho-CoA + GTP = GDP + CoA + H(+). Its pathway is cofactor biosynthesis; coenzyme A biosynthesis. Functionally, catalyzes the GTP-dependent phosphorylation of the 3'-hydroxyl group of dephosphocoenzyme A to form coenzyme A (CoA). The chain is GTP-dependent dephospho-CoA kinase from Methanopyrus kandleri (strain AV19 / DSM 6324 / JCM 9639 / NBRC 100938).